The chain runs to 183 residues: Adenine phosphoribosyltransferase (183 aa).

Belongs to the purine/pyrimidine phosphoribosyltransferase family. In terms of assembly, homodimer.

It is found in the cytoplasm. It carries out the reaction AMP + diphosphate = 5-phospho-alpha-D-ribose 1-diphosphate + adenine. Its pathway is purine metabolism; AMP biosynthesis via salvage pathway; AMP from adenine: step 1/1. In terms of biological role, catalyzes a salvage reaction resulting in the formation of AMP, that is energically less costly than de novo synthesis. The protein is Adenine phosphoribosyltransferase of Blochmanniella floridana.